Reading from the N-terminus, the 748-residue chain is Histone-lysine N-methyltransferase EZH2 (748 aa).

Over residues 184–199 (YEDDEDGDDNQDDEQD) the composition is skewed to acidic residues. 2 disordered regions span residues 184-220 (YEDD…LRKF) and 342-428 (AERI…NIEP). Basic and acidic residues predominate over residues 200–220 (DTAKDQDDNMEDKETQPLRKF). Residues 347–359 (TPPKRPSGRRRGR) are compositionally biased toward basic residues. The segment covering 362–374 (NNTSRPSTPTVNV) has biased composition (polar residues). The segment covering 376-387 (EAKDTDSDREAG) has biased composition (basic and acidic residues). One can recognise a CXC domain in the interval 505 to 607 (CRKIQLKKDG…SKNVSCKNCS (103 aa)). Residues 614-729 (KHLLLAPSDV…TGEELFFDYR (116 aa)) enclose the SET domain.

This sequence belongs to the class V-like SAM-binding methyltransferase superfamily. Histone-lysine methyltransferase family. EZ subfamily. In terms of assembly, component of the prc2/eed-ezh2 complex.

It localises to the nucleus. It catalyses the reaction L-lysyl(27)-[histone H3] + 3 S-adenosyl-L-methionine = N(6),N(6),N(6)-trimethyl-L-lysyl(27)-[histone H3] + 3 S-adenosyl-L-homocysteine + 3 H(+). Polycomb group (PcG) protein. Catalytic subunit of the prc2/eed-ezh2 complex, which methylates 'Lys-9' and 'Lys-27' of histone H3, leading to transcriptional repression of the affected target gene. May repress transcription of the egr2 and en2 genes. May regulate the circadian clock via histone methylation at the promoter of the circadian genes. This Xenopus laevis (African clawed frog) protein is Histone-lysine N-methyltransferase EZH2 (ezh2-a).